A 187-amino-acid polypeptide reads, in one-letter code: Large ribosomal subunit protein uL5 (187 aa).

It belongs to the universal ribosomal protein uL5 family. Part of the 50S ribosomal subunit; part of the 5S rRNA/L5/L18/L25 subcomplex. Contacts the 5S rRNA and the P site tRNA. Forms a bridge to the 30S subunit in the 70S ribosome.

Functionally, this is one of the proteins that bind and probably mediate the attachment of the 5S RNA into the large ribosomal subunit, where it forms part of the central protuberance. In the 70S ribosome it contacts protein S13 of the 30S subunit (bridge B1b), connecting the 2 subunits; this bridge is implicated in subunit movement. Contacts the P site tRNA; the 5S rRNA and some of its associated proteins might help stabilize positioning of ribosome-bound tRNAs. This chain is Large ribosomal subunit protein uL5, found in Mycobacterium leprae (strain Br4923).